Consider the following 206-residue polypeptide: Large ribosomal subunit protein uL4 (206 aa).

This sequence belongs to the universal ribosomal protein uL4 family. As to quaternary structure, part of the 50S ribosomal subunit.

Functionally, one of the primary rRNA binding proteins, this protein initially binds near the 5'-end of the 23S rRNA. It is important during the early stages of 50S assembly. It makes multiple contacts with different domains of the 23S rRNA in the assembled 50S subunit and ribosome. Forms part of the polypeptide exit tunnel. The sequence is that of Large ribosomal subunit protein uL4 from Bradyrhizobium sp. (strain BTAi1 / ATCC BAA-1182).